The primary structure comprises 446 residues: Phosphoglucosamine mutase (446 aa).

The active-site Phosphoserine intermediate is the Ser101. 4 residues coordinate Mg(2+): Ser101, Asp240, Asp242, and Asp244. Ser101 is modified (phosphoserine).

The protein belongs to the phosphohexose mutase family. It depends on Mg(2+) as a cofactor. In terms of processing, activated by phosphorylation.

The enzyme catalyses alpha-D-glucosamine 1-phosphate = D-glucosamine 6-phosphate. Its function is as follows. Catalyzes the conversion of glucosamine-6-phosphate to glucosamine-1-phosphate. The sequence is that of Phosphoglucosamine mutase from Pseudomonas putida (strain ATCC 700007 / DSM 6899 / JCM 31910 / BCRC 17059 / LMG 24140 / F1).